Here is a 171-residue protein sequence, read N- to C-terminus: Nucleoside-triphosphatase THEP1 (171 aa).

ATP contacts are provided by residues 8 to 15 and 95 to 102; these read GPPGAGKS and VYLIDEIG.

The protein belongs to the THEP1 NTPase family.

It carries out the reaction a ribonucleoside 5'-triphosphate + H2O = a ribonucleoside 5'-diphosphate + phosphate + H(+). In terms of biological role, has nucleotide phosphatase activity towards ATP, GTP, CTP, TTP and UTP. May hydrolyze nucleoside diphosphates with lower efficiency. This is Nucleoside-triphosphatase THEP1 from Ignicoccus hospitalis (strain KIN4/I / DSM 18386 / JCM 14125).